Here is a 1254-residue protein sequence, read N- to C-terminus: Protein transport protein Sec31A (1254 aa).

WD repeat units follow at residues Lys-4–Glu-47, Ser-64–Ser-111, Lys-120–Thr-160, Gln-166–Lys-206, Asp-209–Lys-254, Asn-258–Glu-298, and Thr-301–Ala-341. Low complexity predominate over residues Thr-364 to Leu-383. The interval Thr-364–Pro-386 is disordered. A WD 8; interaction with SEC13 repeat occupies Ser-397–Ser-428. 3 disordered regions span residues Pro-818–Ala-892, Cys-983–His-1008, and Pro-1058–Pro-1125. Residues Ala-832–Gln-846 show a composition bias toward low complexity. Composition is skewed to polar residues over residues Gly-847–Ala-863 and Val-872–Ser-881. The span at Gln-1080–Gln-1091 shows a compositional bias: low complexity.

Belongs to the WD repeat SEC31 family. In terms of assembly, COPII is composed of at least 5 proteins: the SEC23/24 complex, the SEC13/31 complex and SAR1. SEC13 and SEC31 make a 2:2 tetramer that forms the edge element of the COPII outer coat. The tetramer self-assembles in multiple copies to form the complete polyhedral cage. Interacts (via WD 8) with SEC13.

It localises to the cytoplasm. The protein resides in the cytoplasmic vesicle. The protein localises to the COPII-coated vesicle membrane. Its subcellular location is the endoplasmic reticulum membrane. Its function is as follows. Component of the coat protein complex II (COPII) which promotes the formation of transport vesicles from the endoplasmic reticulum (ER). The coat has two main functions, the physical deformation of the endoplasmic reticulum membrane into vesicles and the selection of cargo molecules. The sequence is that of Protein transport protein Sec31A (sec31a) from Danio rerio (Zebrafish).